The following is a 61-amino-acid chain: uncharacterized protein (61 aa).

The interval 23–61 is disordered; that stretch reads VPTKWQDYKKPGPNQKYTSDGKKRRRIRRSQKSILGVRS. The segment covering 44–53 has biased composition (basic residues); that stretch reads KKRRRIRRSQ.

This is an uncharacterized protein from Archaeoglobus fulgidus (strain ATCC 49558 / DSM 4304 / JCM 9628 / NBRC 100126 / VC-16).